Here is a 199-residue protein sequence, read N- to C-terminus: UPF0462 protein C4orf33 homolog (199 aa).

The protein belongs to the UPF0462 family.

In Rattus norvegicus (Rat), this protein is UPF0462 protein C4orf33 homolog.